The chain runs to 233 residues: Phosphatidylserine decarboxylase proenzyme (233 aa).

Ser188 serves as the catalytic Schiff-base intermediate with substrate; via pyruvic acid. Ser188 carries the post-translational modification Pyruvic acid (Ser); by autocatalysis.

It belongs to the phosphatidylserine decarboxylase family. PSD-A subfamily. In terms of assembly, heterodimer of a large membrane-associated beta subunit and a small pyruvoyl-containing alpha subunit. It depends on pyruvate as a cofactor. Post-translationally, is synthesized initially as an inactive proenzyme. Formation of the active enzyme involves a self-maturation process in which the active site pyruvoyl group is generated from an internal serine residue via an autocatalytic post-translational modification. Two non-identical subunits are generated from the proenzyme in this reaction, and the pyruvate is formed at the N-terminus of the alpha chain, which is derived from the carboxyl end of the proenzyme. The post-translation cleavage follows an unusual pathway, termed non-hydrolytic serinolysis, in which the side chain hydroxyl group of the serine supplies its oxygen atom to form the C-terminus of the beta chain, while the remainder of the serine residue undergoes an oxidative deamination to produce ammonia and the pyruvoyl prosthetic group on the alpha chain.

Its subcellular location is the cell membrane. It catalyses the reaction a 1,2-diacyl-sn-glycero-3-phospho-L-serine + H(+) = a 1,2-diacyl-sn-glycero-3-phosphoethanolamine + CO2. It functions in the pathway phospholipid metabolism; phosphatidylethanolamine biosynthesis; phosphatidylethanolamine from CDP-diacylglycerol: step 2/2. In terms of biological role, catalyzes the formation of phosphatidylethanolamine (PtdEtn) from phosphatidylserine (PtdSer). This Ruegeria sp. (strain TM1040) (Silicibacter sp.) protein is Phosphatidylserine decarboxylase proenzyme.